Reading from the N-terminus, the 445-residue chain is 6-phosphogluconate dehydrogenase, decarboxylating (445 aa).

NADP(+) is bound by residues 1-4, 22-24, 63-65, and Asn91; these read AVMG, NRS, and VKA. Substrate is bound by residues Asn91 and 117-119; that span reads SGG. Lys172 (proton acceptor) is an active-site residue. 175-176 provides a ligand contact to substrate; it reads HN. Glu179 (proton donor) is an active-site residue. Residues Tyr180, Lys249, Arg276, Arg434, and His440 each coordinate substrate.

This sequence belongs to the 6-phosphogluconate dehydrogenase family. In terms of assembly, homodimer.

It carries out the reaction 6-phospho-D-gluconate + NADP(+) = D-ribulose 5-phosphate + CO2 + NADPH. It functions in the pathway carbohydrate degradation; pentose phosphate pathway; D-ribulose 5-phosphate from D-glucose 6-phosphate (oxidative stage): step 3/3. Its function is as follows. Catalyzes the oxidative decarboxylation of 6-phosphogluconate to ribulose 5-phosphate and CO(2), with concomitant reduction of NADP to NADPH. This chain is 6-phosphogluconate dehydrogenase, decarboxylating (gnd), found in Shigella sonnei.